Consider the following 1578-residue polypeptide: Mediator of RNA polymerase II transcription subunit 14 (1578 aa).

The LXXLL motif 1 signature appears at 49–53 (LAELL). Residues 561-582 (SQSVTAGGTSQSSAPSAATTES) form a disordered region. Low complexity predominate over residues 565–580 (TAGGTSQSSAPSAATT). The LXXLL motif 2 motif lies at 739–743 (LKRLL). 2 disordered regions span residues 1009–1173 (RRRS…PDHK) and 1510–1578 (APGG…GGPN). The segment covering 1084–1093 (SQSHPNFNMT) has biased composition (polar residues). Pro residues-rich tracts occupy residues 1095–1104 (PPAPHMPHPS) and 1157–1167 (PGMPRPSPRPG). Composition is skewed to gly residues over residues 1510–1521 (APGGPGGPGPMG) and 1547–1578 (MGGG…GGPN).

The protein belongs to the Mediator complex subunit 14 family. As to quaternary structure, component of the Mediator complex.

The protein resides in the nucleus. Functionally, component of the Mediator complex, a coactivator involved in the regulated transcription of nearly all RNA polymerase II-dependent genes. Mediator functions as a bridge to convey information from gene-specific regulatory proteins to the basal RNA polymerase II transcription machinery. Mediator is recruited to promoters by direct interactions with regulatory proteins and serves as a scaffold for the assembly of a functional preinitiation complex with RNA polymerase II and the general transcription factors. This is Mediator of RNA polymerase II transcription subunit 14 (MED14) from Aedes aegypti (Yellowfever mosquito).